Here is a 311-residue protein sequence, read N- to C-terminus: Pyrimidine-specific ribonucleoside hydrolase RihA (311 aa).

The active site involves histidine 240.

It belongs to the IUNH family. RihA subfamily.

Its function is as follows. Hydrolyzes with equal efficiency cytidine or uridine to ribose and cytosine or uracil, respectively. The chain is Pyrimidine-specific ribonucleoside hydrolase RihA from Escherichia coli O17:K52:H18 (strain UMN026 / ExPEC).